The sequence spans 222 residues: Superoxide dismutase [Cu-Zn], chloroplastic (222 aa).

Residues 1-68 (MAAHTILASA…AASKPLTIVA (68 aa)) constitute a chloroplast transit peptide. 3 residues coordinate Cu cation: His-114, His-116, and His-131. The cysteines at positions 125 and 214 are disulfide-linked. 4 residues coordinate Zn(2+): His-131, His-139, His-148, and Asp-151. His-188 contacts Cu cation.

Belongs to the Cu-Zn superoxide dismutase family. As to quaternary structure, homotetramer. Requires Cu cation as cofactor. It depends on Zn(2+) as a cofactor.

It localises to the plastid. The protein resides in the chloroplast. The catalysed reaction is 2 superoxide + 2 H(+) = H2O2 + O2. In terms of biological role, destroys radicals which are normally produced within the cells and which are toxic to biological systems. This chain is Superoxide dismutase [Cu-Zn], chloroplastic (SODCP), found in Spinacia oleracea (Spinach).